The primary structure comprises 106 residues: Large ribosomal subunit protein eL42 (106 aa).

The protein belongs to the eukaryotic ribosomal protein eL42 family.

The sequence is that of Large ribosomal subunit protein eL42 (RPL44) from Kluyveromyces lactis (strain ATCC 8585 / CBS 2359 / DSM 70799 / NBRC 1267 / NRRL Y-1140 / WM37) (Yeast).